A 266-amino-acid chain; its full sequence is MAKQMFRALVALLLTLPVWLYAAPRVITLSPANTELAFAAGITPVGVSSYSDYPPEAQKIEQVSTWQGMNLERIVALKPDLVVAWRGGNAERQVNQLTSLGIKVMWVDAVTIEQIADTLRQLAAWSPQPEKAQQAAQTLLNEYAALNAEYAGKAKKRVFLQFGMNPLFTSGKGSIQHQVLTTCGGENVFADSRVPWPQVSREQVLARHPQAIIVAGKAGEILKIEQYWGNLLKIPVIPLNSDWFERASPRIILAAKQLCNALSQVN.

Residues 1–22 form the signal peptide; the sequence is MAKQMFRALVALLLTLPVWLYA. Residues 25–266 enclose the Fe/B12 periplasmic-binding domain; that stretch reads RVITLSPANT…QLCNALSQVN (242 aa). Cyanocob(III)alamin is bound by residues tyrosine 50 and 242–246; that span reads DWFER. A disulfide bond links cysteine 183 and cysteine 259.

It belongs to the BtuF family. As to quaternary structure, the complex is composed of two ATP-binding proteins (BtuD), two transmembrane proteins (BtuC) and a solute-binding protein (BtuF).

It localises to the periplasm. Part of the ABC transporter complex BtuCDF involved in vitamin B12 import. Binds vitamin B12 and delivers it to the periplasmic surface of BtuC. The sequence is that of Vitamin B12-binding protein (btuF) from Salmonella typhimurium (strain LT2 / SGSC1412 / ATCC 700720).